A 1712-amino-acid chain; its full sequence is Latent-transforming growth factor beta-binding protein 1 (1712 aa).

A signal peptide spans 1-20 (MAGAWLRWGLLLWAGLLAWS). The disordered stretch occupies residues 63-148 (SSTATSSRSL…QDTQSSGGSR (86 aa)). Over residues 136–147 (KVQQDTQSSGGS) the composition is skewed to polar residues. Residues 181–213 (TKPSCVPPCQNGGMCLRPQFCVCKPGTKGKACE) enclose the EGF-like 1 domain. 3 disulfides stabilise this stretch: Cys-185–Cys-195, Cys-189–Cys-201, and Cys-203–Cys-212. 2 N-linked (GlcNAc...) asparagine glycosylation sites follow: Asn-339 and Asn-370. Residues 391 to 423 (RVVICHLPCMNGGQCSSRDKCQCPPNFTGKLCQ) form the EGF-like 2 domain. Disulfide bonds link Cys-395/Cys-405, Cys-399/Cys-411, Cys-413/Cys-422, Cys-551/Cys-573, Cys-560/Cys-586, and Cys-574/Cys-589. Asn-416 is a glycosylation site (N-linked (GlcNAc...) asparagine). Positions 549-601 (GRCFQETIGSQCGKALPGLSKQEDCCGTVGTSWGFNKCQKCPKKQSYHGYTQM) constitute a TB 1 domain. Asn-612 carries an N-linked (GlcNAc...) asparagine glycan. Positions 618-658 (DINECQLQGVCPNGECLNTMGSYRCSCKMGFGPDPTFSSCV) constitute an EGF-like 3; calcium-binding domain. 7 disulfides stabilise this stretch: Cys-622/Cys-633, Cys-628/Cys-642, Cys-644/Cys-657, Cys-671/Cys-694, Cys-681/Cys-706, Cys-695/Cys-709, and Cys-696/Cys-721. Ser-639 is a glycosylation site (O-linked (Glc) serine). One can recognise a TB 2 domain in the interval 669 to 721 (GPCYRLVSPGRQCMHPLSVHLTKQICCCSVGKAWGPQCEKCPLPGTAAFKEIC). Residues 752–803 (KNTQPVAKSTHPPPLPAKEEPVEALTSSREHGPGVAEPEVVTAPPEKEIPSL) are disordered. Thr-761 and Thr-793 each carry an O-linked (GalNAc...) threonine glycan. Positions 865–906 (EINECTVNPDICGAGHCINLPVRYTCICYEGYKFSEQQRKCI) constitute an EGF-like 4; calcium-binding domain. 37 disulfide bridges follow: Cys-869-Cys-881, Cys-876-Cys-890, Cys-892-Cys-905, Cys-911-Cys-923, Cys-918-Cys-932, Cys-934-Cys-947, Cys-953-Cys-964, Cys-959-Cys-973, Cys-976-Cys-988, Cys-994-Cys-1005, Cys-1000-Cys-1014, Cys-1017-Cys-1028, Cys-1034-Cys-1045, Cys-1040-Cys-1054, Cys-1056-Cys-1069, Cys-1075-Cys-1086, Cys-1081-Cys-1095, Cys-1097-Cys-1110, Cys-1116-Cys-1127, Cys-1122-Cys-1136, Cys-1138-Cys-1151, Cys-1157-Cys-1169, Cys-1164-Cys-1178, Cys-1180-Cys-1192, Cys-1198-Cys-1210, Cys-1204-Cys-1219, Cys-1221-Cys-1234, Cys-1240-Cys-1252, Cys-1246-Cys-1261, Cys-1263-Cys-1276, Cys-1282-Cys-1294, Cys-1289-Cys-1303, Cys-1305-Cys-1319, Cys-1340-Cys-1363, Cys-1350-Cys-1375, Cys-1364-Cys-1380, and Cys-1365-Cys-1392. The EGF-like 5; calcium-binding domain maps to 907–948 (DIDECAQAQHLCSQGRCENTEGSFLCICPAGFIASEEGSNCI). Ser-929 is a glycosylation site (O-linked (Glc) serine). Residues 949–989 (DVDECLRPDVCRDGRCINTAGAFRCEYCDSGYRMSRRGHCE) form the EGF-like 6; calcium-binding domain. Asn-966 carries the (3R)-3-hydroxyasparagine modification. The EGF-like 7; calcium-binding domain maps to 990–1029 (DIDECLTPSTCPEEQCVNSPGSYQCVPCTEGFRGWNGQCL). O-linked (Glc) serine glycosylation occurs at Ser-1011. An EGF-like 8; calcium-binding domain is found at 1030–1070 (DVDECLQPKVCTNGSCTNLEGSYMCSCHKGYSPTPDHRHCQ). Asn-1042 carries an N-linked (GlcNAc...) asparagine glycan. O-linked (Glc) serine glycosylation is present at Ser-1051. Residues 1071–1111 (DIDECQQGNLCMNGQCKNTDGSFRCTCGQGYQLSAAKDQCE) enclose the EGF-like 9; calcium-binding domain. In terms of domain architecture, EGF-like 10; calcium-binding spans 1112 to 1152 (DIDECEHRHLCSHGQCRNTEGSFQCLCNQGYRASVLGDHCE). Asn-1129 bears the (3R)-3-hydroxyasparagine mark. An O-linked (Glc) serine glycan is attached at Ser-1133. One can recognise an EGF-like 11; calcium-binding domain in the interval 1153–1193 (DINECLEDSSVCQGGDCINTAGSYDCTCPDGLQLNDNKGCQ). The EGF-like 12; calcium-binding domain maps to 1194-1235 (DINECAQPGLCAPHGECLNTQGSFHCVCEQGFSISADGRTCE). Ser-1216 carries O-linked (Glc) serine glycosylation. The region spanning 1236–1277 (DIDECVNNTVCDSHGFCDNTAGSFRCLCYQGFQAPQDGQGCV) is the EGF-like 13; calcium-binding domain. An N-linked (GlcNAc...) asparagine glycan is attached at Asn-1242. In terms of domain architecture, EGF-like 14; calcium-binding spans 1278-1320 (DVNECELLSGVCGEAFCENVEGSFLCVCADENQEYSPMTGQCR). The interval 1335–1402 (EEKKECYYNL…PRGKGFVPAG (68 aa)) is 8-Cys3 region. Residues 1338–1392 (KECYYNLNDASLCDNVLAPNVTKQECCCTSGAGWGDNCEIFPCPVQGTAEFSEMC) form the TB 3 domain. An N-linked (GlcNAc...) asparagine glycan is attached at Asn-1357. The residue at position 1405 (Ser-1405) is a Phosphoserine. An EGF-like 15; calcium-binding domain is found at 1415 to 1457 (DADECLLFGEEICKNGYCLNTQPGYECYCKEGTYYDPVKLQCF). Disulfide bonds link Cys-1419–Cys-1432, Cys-1427–Cys-1441, Cys-1443–Cys-1456, Cys-1462–Cys-1473, Cys-1468–Cys-1482, Cys-1484–Cys-1497, Cys-1517–Cys-1541, Cys-1527–Cys-1553, Cys-1542–Cys-1556, and Cys-1543–Cys-1568. The EGF-like 16; calcium-binding domain occupies 1458-1498 (DMDECQDPNSCIDGQCVNTEGSYNCFCTHPMVLDASEKRCV). Ser-1479 is a glycosylation site (O-linked (Glc) serine). Residues 1498–1712 (VQPTESNEQI…LNLDKDSDLE (215 aa)) are C-terminal domain. Residues 1515 to 1568 (DLCWEHLSEEYVCSRPLVGKQTTYTECCCLYGEAWGMQCALCPMKDSDDYAQLC) enclose the TB 4 domain. Phosphoserine is present on residues Ser-1588 and Ser-1607. The 41-residue stretch at 1612 to 1652 (QAEECGILNGCENGRCVRVQEGYTCDCFDGYHLDMAKMTCV) folds into the EGF-like 17 domain. Disulfide bonds link Cys-1616-Cys-1627, Cys-1622-Cys-1636, Cys-1638-Cys-1651, Cys-1657-Cys-1672, Cys-1667-Cys-1681, and Cys-1683-Cys-1696. One can recognise an EGF-like 18; calcium-binding domain in the interval 1653–1697 (DVNECSELNNRMSLCKNAKCINTEGSYKCVCLPGYVPSDKPNYCT). The O-linked (Glc) serine glycan is linked to Ser-1678.

It belongs to the LTBP family. Interacts with TGFB1; associates via disulfide bonds with the Latency-associated peptide chain (LAP) regulatory chain of TGFB1, leading to regulate activation of TGF-beta-1. LTBP1 does not bind directly to TGF-beta-1, the active chain of TGFB1. Interacts (via C-terminal domain) with FBN1 (via N-terminal domain). Interacts with FBN2. Interacts with ADAMTSL2. Interacts with EFEMP2. Contains hydroxylated asparagine residues. In terms of processing, two intrachain disulfide bonds from the TB3 domain are rearranged upon TGFB1 binding, and form interchain bonds with TGFB1 propeptide, anchoring it to the extracellular matrix. Post-translationally, O-glycosylated on serine residues by POGLUT2 and POGLUT3.

Its subcellular location is the secreted. The protein resides in the extracellular space. It is found in the extracellular matrix. Functionally, key regulator of transforming growth factor beta (TGFB1, TGFB2 and TGFB3) that controls TGF-beta activation by maintaining it in a latent state during storage in extracellular space. Associates specifically via disulfide bonds with the Latency-associated peptide (LAP), which is the regulatory chain of TGF-beta, and regulates integrin-dependent activation of TGF-beta. Outcompeted by LRRC32/GARP for binding to LAP regulatory chain of TGF-beta. The sequence is that of Latent-transforming growth factor beta-binding protein 1 (Ltbp1) from Rattus norvegicus (Rat).